The sequence spans 160 residues: Non-secretory ribonuclease (160 aa).

A signal peptide spans 1–27 (MVPKLFTSPICLLLLLGLMGVEGSLHA). The C-linked (Man) tryptophan glycan is linked to tryptophan 34. The Proton acceptor role is filled by histidine 42. The N-linked (GlcNAc...) asparagine glycan is linked to asparagine 44. Intrachain disulfides connect cysteine 50–cysteine 110, cysteine 64–cysteine 122, cysteine 82–cysteine 137, and cysteine 89–cysteine 98. The residue at position 60 (tyrosine 60) is a 3'-nitrotyrosine. 65-69 (KNQNT) is a substrate binding site. N-linked (GlcNAc...) asparagine glycans are attached at residues asparagine 92, asparagine 111, asparagine 118, and asparagine 138. The active-site Proton donor is histidine 155.

It belongs to the pancreatic ribonuclease family. In terms of assembly, interacts with and forms a tight 1:1 complex with RNH1. Dimerization of two such complexes may occur.

The protein localises to the lysosome. Its subcellular location is the cytoplasmic granule. It catalyses the reaction an [RNA] containing cytidine + H2O = an [RNA]-3'-cytidine-3'-phosphate + a 5'-hydroxy-ribonucleotide-3'-[RNA].. It carries out the reaction an [RNA] containing uridine + H2O = an [RNA]-3'-uridine-3'-phosphate + a 5'-hydroxy-ribonucleotide-3'-[RNA].. Its function is as follows. This is a non-secretory ribonuclease. It is a pyrimidine specific nuclease with a slight preference for U. Cytotoxin and helminthotoxin. Possesses a wide variety of biological activities. The sequence is that of Non-secretory ribonuclease (RNASE2) from Chlorocebus aethiops (Green monkey).